The primary structure comprises 220 residues: Ribose-5-phosphate isomerase A (220 aa).

Residues 28-31, 81-84, and 94-97 each bind substrate; these read TGST, DGAD, and KGGG. The Proton acceptor role is filled by glutamate 103. Lysine 121 serves as a coordination point for substrate.

It belongs to the ribose 5-phosphate isomerase family. Homodimer.

It catalyses the reaction aldehydo-D-ribose 5-phosphate = D-ribulose 5-phosphate. It participates in carbohydrate degradation; pentose phosphate pathway; D-ribose 5-phosphate from D-ribulose 5-phosphate (non-oxidative stage): step 1/1. Its function is as follows. Catalyzes the reversible conversion of ribose-5-phosphate to ribulose 5-phosphate. This is Ribose-5-phosphate isomerase A from Coxiella burnetii (strain CbuK_Q154) (Coxiella burnetii (strain Q154)).